We begin with the raw amino-acid sequence, 358 residues long: Membrane-bound lytic murein transglycosylase C (358 aa).

Residues 1 to 16 form the signal peptide; sequence MKKILALLVIAPLLIS. C17 is lipidated: N-palmitoyl cysteine. Residue C17 is the site of S-diacylglycerol cysteine attachment.

The protein belongs to the transglycosylase Slt family.

The protein localises to the cell outer membrane. The catalysed reaction is Exolytic cleavage of the (1-&gt;4)-beta-glycosidic linkage between N-acetylmuramic acid (MurNAc) and N-acetylglucosamine (GlcNAc) residues in peptidoglycan, from either the reducing or the non-reducing ends of the peptidoglycan chains, with concomitant formation of a 1,6-anhydrobond in the MurNAc residue.. In terms of biological role, murein-degrading enzyme. May play a role in recycling of muropeptides during cell elongation and/or cell division. In Serratia proteamaculans (strain 568), this protein is Membrane-bound lytic murein transglycosylase C.